Consider the following 1576-residue polypeptide: Disco-interacting protein 2 homolog B (1576 aa).

Phosphoserine occurs at positions 9, 50, and 53. One can recognise a DMAP1-binding domain in the interval 12–131 (AVAALPPEVR…PMPTKRRSTF (120 aa)). Residues 31-167 (LSEGDITQKG…AALSAALQQS (137 aa)) form a disordered region. The span at 52-62 (YSPQTQETDSA) shows a compositional bias: polar residues. Residues 70–83 (QTPAPSAAQTSAPS) show a composition bias toward low complexity. Thr71 is modified (phosphothreonine). The segment covering 92-104 (GARDERYRSDIHT) has biased composition (basic and acidic residues). Ser100 is subject to Phosphoserine. Thr140 carries the post-translational modification Phosphothreonine. Residues Ser146, Ser148, and Ser153 each carry the phosphoserine modification. A compositionally biased stretch (low complexity) spans 155-167 (RRQAALSAALQQS). A phosphoserine mark is found at Ser178, Ser193, and Ser203. Residues 179 to 201 (IQGSSTSSSASSTLSHGEVKGTS) form a disordered region. The span at 182–193 (SSTSSSASSTLS) shows a compositional bias: low complexity. A disordered region spans residues 217–246 (SAPPDVTTTTSSSSSSSSIRPANIDLPPSG). Residues 223–234 (TTTTSSSSSSSS) show a composition bias toward low complexity. Residue Ser259 is modified to Phosphoserine.

The protein belongs to the DIP2 family. In terms of assembly, interacts with alpha-tubulin. Moderately expressed in adult brain, placenta, skeletal muscle, heart, kidney, pancreas, lung, spleen and colon. Expression was weaker in adult liver, kidney, spleen, and ovary, and in fetal brain and liver. In the brain, it is expressed in the cerebral cortex; the frontal, parietal, occipital and temporal lobes; the paracentral gyrus; the pons; the corpus callosum and the hippocampus. Highest expression levels in the brain were found in the cerebral cortex and the frontal and parietal lobes.

The protein localises to the cell projection. Its subcellular location is the dendrite. The protein resides in the axon. It localises to the perikaryon. Its function is as follows. Negatively regulates axonal outgrowth and is essential for normal synaptic transmission. Not required for regulation of axon polarity. Promotes acetylation of alpha-tubulin. This is Disco-interacting protein 2 homolog B (DIP2B) from Homo sapiens (Human).